Here is a 418-residue protein sequence, read N- to C-terminus: Inner capsid protein sigma-2 (418 aa).

Belongs to the orthoreovirus sigma-1 protein family. In terms of assembly, interacts with protein mu-NS; in viral inclusions.

Its subcellular location is the virion. Its function is as follows. Inner capsid (core) component. The polypeptide is Inner capsid protein sigma-2 (S2) (Mammalia (T2J)).